Consider the following 232-residue polypeptide: tRNA (guanine-N(1)-)-methyltransferase (232 aa).

S-adenosyl-L-methionine-binding positions include G114 and 134-139 (IGDYIL).

This sequence belongs to the RNA methyltransferase TrmD family. As to quaternary structure, homodimer.

The protein resides in the cytoplasm. The enzyme catalyses guanosine(37) in tRNA + S-adenosyl-L-methionine = N(1)-methylguanosine(37) in tRNA + S-adenosyl-L-homocysteine + H(+). Specifically methylates guanosine-37 in various tRNAs. This chain is tRNA (guanine-N(1)-)-methyltransferase, found in Wolbachia pipientis subsp. Culex pipiens (strain wPip).